A 500-amino-acid chain; its full sequence is Cholesterol 24-hydroxylase (500 aa).

The chain crosses the membrane as a helical span at residues 3–23; the sequence is PGLLLLGSAVLLAFGLCCTFV. Residue C437 coordinates heme.

It belongs to the cytochrome P450 family. Heme serves as cofactor. Expressed in brain. The mRNA was broadly distributed with higher levels in gray matter zones and lower levels in regions rich in white matter. Not detected in fetal sample but its expression increases linearly with age.

The protein localises to the endoplasmic reticulum membrane. The protein resides in the microsome membrane. It is found in the postsynapse. Its subcellular location is the presynapse. It localises to the cell projection. The protein localises to the dendrite. It catalyses the reaction cholesterol + reduced [NADPH--hemoprotein reductase] + O2 = (24S)-hydroxycholesterol + oxidized [NADPH--hemoprotein reductase] + H2O + H(+). The enzyme catalyses cholestanol + reduced [NADPH--hemoprotein reductase] + O2 = (24S)-hydroxycholestanol + oxidized [NADPH--hemoprotein reductase] + H2O + H(+). It carries out the reaction 7-dehydrocholesterol + reduced [NADPH--hemoprotein reductase] + O2 = cholesta-5,7-dien-3beta,24S-diol + oxidized [NADPH--hemoprotein reductase] + H2O + H(+). The catalysed reaction is 7-dehydrocholesterol + reduced [NADPH--hemoprotein reductase] + O2 = cholesta-5,7-dien-3beta,25-diol + oxidized [NADPH--hemoprotein reductase] + H2O + H(+). It catalyses the reaction desmosterol + reduced [NADPH--hemoprotein reductase] + O2 = (24Z),26-hydroxydesmosterol + oxidized [NADPH--hemoprotein reductase] + H2O + H(+). The enzyme catalyses desmosterol + reduced [NADPH--hemoprotein reductase] + O2 = (24S)-25-epoxycholesterol + oxidized [NADPH--hemoprotein reductase] + H2O + H(+). It carries out the reaction 4beta-hydroxycholesterol + reduced [NADPH--hemoprotein reductase] + O2 = 4beta,24S-dihydroxycholesterol + oxidized [NADPH--hemoprotein reductase] + H2O + H(+). The catalysed reaction is (24S)-hydroxycholesterol + reduced [NADPH--hemoprotein reductase] + O2 = (24S,25R)-24,26-dihydroxycholesterol + oxidized [NADPH--hemoprotein reductase] + H2O + H(+). It catalyses the reaction (24S)-hydroxycholesterol + reduced [NADPH--hemoprotein reductase] + O2 = 24S,25-dihydroxycholesterol + oxidized [NADPH--hemoprotein reductase] + H2O + H(+). The enzyme catalyses 7alpha-hydroxycholesterol + reduced [NADPH--hemoprotein reductase] + O2 = (24S)-7alpha-dihydroxycholesterol + oxidized [NADPH--hemoprotein reductase] + H2O + H(+). It carries out the reaction progesterone + reduced [NADPH--hemoprotein reductase] + O2 = 17alpha-hydroxyprogesterone + oxidized [NADPH--hemoprotein reductase] + H2O + H(+). The catalysed reaction is testosterone + reduced [NADPH--hemoprotein reductase] + O2 = 16beta,17beta-dihydroxyandrost-4-en-3-one + oxidized [NADPH--hemoprotein reductase] + H2O + H(+). It catalyses the reaction testosterone + reduced [NADPH--hemoprotein reductase] + O2 = 2-hydroxytestosterone + oxidized [NADPH--hemoprotein reductase] + H2O + H(+). The enzyme catalyses testosterone + reduced [NADPH--hemoprotein reductase] + O2 = 6beta,17beta-dihydroxyandrost-4-en-3-one + oxidized [NADPH--hemoprotein reductase] + H2O + H(+). Its pathway is steroid metabolism; cholesterol degradation. The protein operates within lipid metabolism; C21-steroid hormone metabolism. Its function is as follows. P450 monooxygenase that plays a major role in cholesterol homeostasis in the brain. Primarily catalyzes the hydroxylation (with S stereochemistry) at C-24 of cholesterol side chain, triggering cholesterol diffusion out of neurons and its further degradation. By promoting constant cholesterol elimination in neurons, may activate the mevalonate pathway and coordinate the synthesis of new cholesterol and nonsterol isoprenoids involved in synaptic activity and learning. Further hydroxylates cholesterol derivatives and hormone steroids on both the ring and side chain of these molecules, converting them into active oxysterols involved in lipid signaling and biosynthesis. Acts as an epoxidase converting cholesta-5,24-dien-3beta-ol/desmosterol into (24S),25-epoxycholesterol, an abundant lipid ligand of nuclear NR1H2 and NR1H3 receptors shown to promote neurogenesis in developing brain. May also catalyze the oxidative metabolism of xenobiotics, such as clotrimazole. This chain is Cholesterol 24-hydroxylase, found in Homo sapiens (Human).